The chain runs to 414 residues: Serine/threonine transporter SstT (414 aa).

A run of 8 helical transmembrane segments spans residues 22–42, 54–74, 89–109, 148–168, 189–209, 223–243, 305–325, and 337–357; these read GLVL…TIGF, IFVK…VMAA, IIVL…IAGF, AIFK…GLAL, IVHV…AETL, LLAV…PILV, MAGA…TLGL, and IVAA…LLLI.

The protein belongs to the dicarboxylate/amino acid:cation symporter (DAACS) (TC 2.A.23) family.

It is found in the cell inner membrane. The catalysed reaction is L-serine(in) + Na(+)(in) = L-serine(out) + Na(+)(out). It catalyses the reaction L-threonine(in) + Na(+)(in) = L-threonine(out) + Na(+)(out). Involved in the import of serine and threonine into the cell, with the concomitant import of sodium (symport system). This chain is Serine/threonine transporter SstT, found in Haemophilus influenzae (strain 86-028NP).